A 410-amino-acid polypeptide reads, in one-letter code: Putative ankyrin repeat protein FPV240 (410 aa).

ANK repeat units follow at residues 33–62 (NGYSPIKMAVRLRDVEMIKLLMSYNTYPDY), 66–95 (DIESELHEAVEEGDVVKVEELLDSGKFIND), 100–129 (KGNTPLHLATISKNLDMMRLLIARGADTDV), 133–162 (DRFTPLHLAVMSKDIKGIELLLDHRACTNI), 166–195 (YGCTPLIIAMSKGDTEVCRMLLDSGANIDY), and 200–229 (PCVTAMCYAIQNNKIDMVSMFLKRGADSNI).

The sequence is that of Putative ankyrin repeat protein FPV240 from Vertebrata (FPV).